Consider the following 341-residue polypeptide: tRNA N6-adenosine threonylcarbamoyltransferase (341 aa).

2 residues coordinate Fe cation: His113 and His117. Residues 136 to 140 (IISGG), Asp169, Gly182, and Asn280 contribute to the substrate site. Asp308 contributes to the Fe cation binding site.

This sequence belongs to the KAE1 / TsaD family. Requires Fe(2+) as cofactor.

Its subcellular location is the cytoplasm. It carries out the reaction L-threonylcarbamoyladenylate + adenosine(37) in tRNA = N(6)-L-threonylcarbamoyladenosine(37) in tRNA + AMP + H(+). In terms of biological role, required for the formation of a threonylcarbamoyl group on adenosine at position 37 (t(6)A37) in tRNAs that read codons beginning with adenine. Is involved in the transfer of the threonylcarbamoyl moiety of threonylcarbamoyl-AMP (TC-AMP) to the N6 group of A37, together with TsaE and TsaB. TsaD likely plays a direct catalytic role in this reaction. In Anaplasma marginale (strain St. Maries), this protein is tRNA N6-adenosine threonylcarbamoyltransferase.